The primary structure comprises 824 residues: Acyl-homoserine lactone acylase QuiP (824 aa).

An N-terminal signal peptide occupies residues 1-26 (MASPALRHFLPRFGAAAAAASFLSLA). Serine 264 functions as the Nucleophile in the catalytic mechanism.

It belongs to the peptidase S45 family. Heterodimer of an alpha subunit and a beta subunit processed from the same precursor.

The protein localises to the periplasm. It catalyses the reaction an N-acyl-L-homoserine lactone + H2O = L-homoserine lactone + a carboxylate. Catalyzes the deacylation of acyl-homoserine lactone (AHL or acyl-HSL), releasing homoserine lactone (HSL) and the corresponding fatty acid. Possesses a specificity for the degradation of long-chain acyl-HSLs (side chains of seven or more carbons in length). The polypeptide is Acyl-homoserine lactone acylase QuiP (quiP) (Pseudomonas syringae pv. tomato (strain ATCC BAA-871 / DC3000)).